The primary structure comprises 307 residues: MSLENDAAAPPPPPLPPPPPPQPPSLARSESSKKKLYQALAEGRTAVEGDYEEASIIIGQRESSFSKDLQWLLFNNYVPSLIQDGPQCGLVALWMAAHLLQPPKTLLLETLVQTAKDNGYTEQGEMFSASDMAKLAEDVCGCRVQRLSGGMLGENTAVILKHLINRQPILIPYDEDFNHEPCLRNGHKAHWAVASGILLGLREGCVNYKHFPPDITLPWLRLAQSEASVSWPIDDIEEVFVLAKQGKSLRYQLWEFESVAQSNKQLKEMDPQRASDGTRYVLPPGGVQDGLAGQVLLLHTNTEQTKN.

The disordered stretch occupies residues 1–34; that stretch reads MSLENDAAAPPPPPLPPPPPPQPPSLARSESSKK. Residues 9 to 24 show a composition bias toward pro residues; sequence APPPPPLPPPPPPQPP. The segment at 80-200 is peptidase C39-like; the sequence is SLIQDGPQCG…WAVASGILLG (121 aa). The active site involves cysteine 88.

It belongs to the ACTMAP family.

The protein resides in the cytoplasm. The enzyme catalyses N-terminal N(alpha)-acetyl-L-methionyl-L-aspartyl-[protein] + H2O = N-terminal L-aspartyl-[protein] + N-acetyl-L-methionine. The catalysed reaction is N-terminal N(alpha)-acetyl-L-methionyl-L-glutamyl-[protein] + H2O = N-terminal L-glutamyl-[protein] + N-acetyl-L-methionine. It catalyses the reaction N-terminal N(alpha)-acetyl-L-cysteinyl-L-aspartyl-[protein] + H2O = N-terminal L-aspartyl-[protein] + N-acetyl-L-cysteine. It carries out the reaction N-terminal N(alpha)-acetyl-L-cysteinyl-L-glutamyl-[protein] + H2O = N-terminal L-glutamyl-[protein] + N-acetyl-L-cysteine. In terms of biological role, actin maturation protease that specifically mediates the cleavage of immature acetylated N-terminal actin, thereby contributing to actin maturation. Cleaves N-terminal acetylated methionine of immature cytoplasmic actin after translation. Cleaves N-terminal acetylated cysteine of muscle actin after canonical removal of N-terminal methionine. The polypeptide is Actin maturation protease (Danio rerio (Zebrafish)).